The sequence spans 389 residues: Phosphoribosylformylglycinamidine cyclo-ligase, chloroplastic (389 aa).

The N-terminal 58 residues, 1-58 (MEARILQSSSSCYSSLYAVNRSRFSSVSSPKPFSVSFAQTTRTRTRVLSMSKKDGRTD), are a transit peptide targeting the chloroplast. Residues 46-65 (RVLSMSKKDGRTDKDDDTDS) are disordered.

The protein belongs to the AIR synthase family.

It localises to the plastid. The protein localises to the chloroplast. It carries out the reaction 2-formamido-N(1)-(5-O-phospho-beta-D-ribosyl)acetamidine + ATP = 5-amino-1-(5-phospho-beta-D-ribosyl)imidazole + ADP + phosphate + H(+). It participates in purine metabolism; IMP biosynthesis via de novo pathway; 5-amino-1-(5-phospho-D-ribosyl)imidazole from N(2)-formyl-N(1)-(5-phospho-D-ribosyl)glycinamide: step 2/2. This Arabidopsis thaliana (Mouse-ear cress) protein is Phosphoribosylformylglycinamidine cyclo-ligase, chloroplastic (PUR5).